The primary structure comprises 507 residues: Dolichyl pyrophosphate Man9GlcNAc2 alpha-1,3-glucosyltransferase (507 aa).

The Cytoplasmic portion of the chain corresponds to 1–3 (MEK). Residues 4-24 (WSLMTITVLLALTVRWTVSLG) form a helical membrane-spanning segment. The Lumenal portion of the chain corresponds to 25–114 (SYSGAGKPPM…SQSHKLFMRT (90 aa)). N59 carries N-linked (GlcNAc...) asparagine glycosylation. Residues 115–135 (TVFVADLLIYIPAVILYCCSL) traverse the membrane as a helical segment. The Cytoplasmic portion of the chain corresponds to 136-143 (KETSTKKK). A helical transmembrane segment spans residues 144 to 164 (VSSALCILLYPGLILIDHGHF). At 165–168 (QYNS) the chain is on the lumenal side. Residues 169 to 189 (VSLGFALWGVLCLSYDWDLLG) form a helical membrane-spanning segment. Residues 190–226 (SAAFCLALNYKQMELYHSLPFFCYLLGKCFKKGLKGK) are Cytoplasmic-facing. A helical membrane pass occupies residues 227–247 (GLLLLIKLAGTVVASFAVCWL). The Lumenal segment spans residues 248–297 (PFCTDVEQIMQVLRRLFPIDRGLFEDKVANIWCSLSVLIKIKNVVSPQTQ). The helical transmembrane segment at 298–318 (LKLSFAVTFLSLLPTCIKLTV) threads the bilayer. Residues 319–338 (QPSLRGFKLTLVSCALSFFL) are Cytoplasmic-facing. Residues 339–359 (FSFQVHEKSILLVSVPVCLII) form a helical membrane-spanning segment. Over 360–361 (NE) the chain is Lumenal. The helical transmembrane segment at 362–382 (VPFMATWFLLVSTFSMLPLLL) threads the bilayer. Residues 383-387 (KDGLL) lie on the Cytoplasmic side of the membrane. The helical transmembrane segment at 388-408 (LPYAVTTLAFLSACVASFAIF) threads the bilayer. The Lumenal segment spans residues 409-441 (EKTSAKDLQLKPFSQSLRGYVSWFKLFPKIVRS). Residues 442 to 462 (LFLLSVTLMGVLSVMSAAVHP) form a helical membrane-spanning segment. Topologically, residues 463–473 (PQRFPDLFPVS) are cytoplasmic. Residues 474-494 (VSSISCLHFLFFLVYFNVIIL) form a helical membrane-spanning segment. Over 495-507 (WDSKNSRNQKKVS) the chain is Lumenal.

Belongs to the ALG6/ALG8 glucosyltransferase family.

It localises to the endoplasmic reticulum membrane. It catalyses the reaction an alpha-D-Man-(1-&gt;2)-alpha-D-Man-(1-&gt;2)-alpha-D-Man-(1-&gt;3)-[alpha-D-Man-(1-&gt;2)-alpha-D-Man-(1-&gt;3)-[alpha-D-Man-(1-&gt;2)-alpha-D-Man-(1-&gt;6)]-alpha-D-Man-(1-&gt;6)]-beta-D-Man-(1-&gt;4)-beta-D-GlcNAc-(1-&gt;4)-alpha-D-GlcNAc-diphospho-di-trans,poly-cis-dolichol + a di-trans,poly-cis-dolichyl beta-D-glucosyl phosphate = an alpha-D-Glc-(1-&gt;3)-alpha-D-Man-(1-&gt;2)-alpha-D-Man-(1-&gt;2)-alpha-D-Man-(1-&gt;3)-[alpha-D-Man-(1-&gt;2)-alpha-D-Man-(1-&gt;3)-[alpha-D-Man-(1-&gt;2)-alpha-D-Man-(1-&gt;6)]-alpha-D-Man-(1-&gt;6)]-beta-D-Man-(1-&gt;4)-beta-D-GlcNAc-(1-&gt;4)-alpha-D-GlcNAc-diphospho-di-trans,poly-cis-dolichol + a di-trans,poly-cis-dolichyl phosphate + H(+). It participates in protein modification; protein glycosylation. In terms of biological role, dolichyl pyrophosphate Man9GlcNAc2 alpha-1,3-glucosyltransferase that operates in the biosynthetic pathway of dolichol-linked oligosaccharides, the glycan precursors employed in protein asparagine (N)-glycosylation. The assembly of dolichol-linked oligosaccharides begins on the cytosolic side of the endoplasmic reticulum membrane and finishes in its lumen. The sequential addition of sugars to dolichol pyrophosphate produces dolichol-linked oligosaccharides containing fourteen sugars, including two GlcNAcs, nine mannoses and three glucoses. Once assembled, the oligosaccharide is transferred from the lipid to nascent proteins by oligosaccharyltransferases. In the lumen of the endoplasmic reticulum, adds the first glucose residue from dolichyl phosphate glucose (Dol-P-Glc) onto the lipid-linked oligosaccharide intermediate Man(9)GlcNAc(2)-PP-Dol to produce Glc(1)Man(9)GlcNAc(2)-PP-Dol. Glc(1)Man(9)GlcNAc(2)-PP-Dol is a substrate for ALG8, the following enzyme in the biosynthetic pathway. This Gallus gallus (Chicken) protein is Dolichyl pyrophosphate Man9GlcNAc2 alpha-1,3-glucosyltransferase.